We begin with the raw amino-acid sequence, 324 residues long: Quinolinate synthase (324 aa).

The iminosuccinate site is built by His-39 and Ser-56. Cys-101 contributes to the [4Fe-4S] cluster binding site. Iminosuccinate contacts are provided by residues 127-129 and Ser-144; that span reads YIN. Position 187 (Cys-187) interacts with [4Fe-4S] cluster. Iminosuccinate contacts are provided by residues 213–215 and Thr-230; that span reads HPE. Residue Cys-280 coordinates [4Fe-4S] cluster.

This sequence belongs to the quinolinate synthase family. Type 2 subfamily. The cofactor is [4Fe-4S] cluster.

The protein resides in the cytoplasm. The enzyme catalyses iminosuccinate + dihydroxyacetone phosphate = quinolinate + phosphate + 2 H2O + H(+). Its pathway is cofactor biosynthesis; NAD(+) biosynthesis; quinolinate from iminoaspartate: step 1/1. Functionally, catalyzes the condensation of iminoaspartate with dihydroxyacetone phosphate to form quinolinate. The polypeptide is Quinolinate synthase (Nostoc sp. (strain PCC 7120 / SAG 25.82 / UTEX 2576)).